A 316-amino-acid chain; its full sequence is Beta-ketoacyl-[acyl-carrier-protein] synthase III (316 aa).

Catalysis depends on residues Cys-112 and His-243. The ACP-binding stretch occupies residues 244–248 (QANLR). Residue Asn-273 is part of the active site.

It belongs to the thiolase-like superfamily. FabH family. Homodimer.

The protein localises to the cytoplasm. It carries out the reaction malonyl-[ACP] + acetyl-CoA + H(+) = 3-oxobutanoyl-[ACP] + CO2 + CoA. Its pathway is lipid metabolism; fatty acid biosynthesis. In terms of biological role, catalyzes the condensation reaction of fatty acid synthesis by the addition to an acyl acceptor of two carbons from malonyl-ACP. Catalyzes the first condensation reaction which initiates fatty acid synthesis and may therefore play a role in governing the total rate of fatty acid production. Possesses both acetoacetyl-ACP synthase and acetyl transacylase activities. Its substrate specificity determines the biosynthesis of branched-chain and/or straight-chain of fatty acids. The polypeptide is Beta-ketoacyl-[acyl-carrier-protein] synthase III (Yersinia pseudotuberculosis serotype O:1b (strain IP 31758)).